A 448-amino-acid chain; its full sequence is Tubulin alpha-5 chain (448 aa).

The short motif at 1–4 (MREC) is the MREC motif element. Gln11 contacts GTP. Lys40 is subject to N6-acetyllysine. The GTP site is built by Glu71, Ser140, Gly144, Thr145, Thr179, Asn206, and Asn228. Glu71 contributes to the Mg(2+) binding site. Residue Glu254 is part of the active site.

This sequence belongs to the tubulin family. As to quaternary structure, dimer of alpha and beta chains. A typical microtubule is a hollow water-filled tube with an outer diameter of 25 nm and an inner diameter of 15 nM. Alpha-beta heterodimers associate head-to-tail to form protofilaments running lengthwise along the microtubule wall with the beta-tubulin subunit facing the microtubule plus end conferring a structural polarity. Microtubules usually have 13 protofilaments but different protofilament numbers can be found in some organisms and specialized cells. Mg(2+) serves as cofactor. Some glutamate residues at the C-terminus are polyglycylated, resulting in polyglycine chains on the gamma-carboxyl group. Glycylation is mainly limited to tubulin incorporated into axonemes (cilia and flagella) whereas glutamylation is prevalent in neuronal cells, centrioles, axonemes, and the mitotic spindle. Both modifications can coexist on the same protein on adjacent residues, and lowering polyglycylation levels increases polyglutamylation, and reciprocally. The precise function of polyglycylation is still unclear. In terms of processing, some glutamate residues at the C-terminus are polyglutamylated, resulting in polyglutamate chains on the gamma-carboxyl group. Polyglutamylation plays a key role in microtubule severing by spastin (SPAST). SPAST preferentially recognizes and acts on microtubules decorated with short polyglutamate tails: severing activity by SPAST increases as the number of glutamates per tubulin rises from one to eight, but decreases beyond this glutamylation threshold. Post-translationally, acetylation of alpha chains at Lys-40 is located inside the microtubule lumen. This modification has been correlated with increased microtubule stability, intracellular transport and ciliary assembly.

Its subcellular location is the cytoplasm. It localises to the cytoskeleton. The catalysed reaction is GTP + H2O = GDP + phosphate + H(+). Functionally, tubulin is the major constituent of microtubules, a cylinder consisting of laterally associated linear protofilaments composed of alpha- and beta-tubulin heterodimers. Microtubules grow by the addition of GTP-tubulin dimers to the microtubule end, where a stabilizing cap forms. Below the cap, tubulin dimers are in GDP-bound state, owing to GTPase activity of alpha-tubulin. In Gallus gallus (Chicken), this protein is Tubulin alpha-5 chain.